Consider the following 193-residue polypeptide: Acyl carrier protein phosphodiesterase (193 aa).

It belongs to the AcpH family.

The enzyme catalyses holo-[ACP] + H2O = apo-[ACP] + (R)-4'-phosphopantetheine + H(+). Its function is as follows. Converts holo-ACP to apo-ACP by hydrolytic cleavage of the phosphopantetheine prosthetic group from ACP. The protein is Acyl carrier protein phosphodiesterase of Salmonella agona (strain SL483).